The primary structure comprises 415 residues: MRSNSIFTKEIDSEAVKKSSNLRPPSTGSSNSNGSDTASPKKKKKGFFRSLFGSSSSGSKSCGSPFTRIWLEYFEVSLRKNDVDHFRPGYWILDTNIDFFYEIMLRQVLLKRPKEESQQIYLLRPAMVFFLAQAPNPLEIESALPPAMFDASFIFLPINDTNECGIESGSHWSLLVVSVEKGLGWYYDSMSNGNTNDCNLAIKNLGILLKKEFRVRHMKTPQQINDCDCGLHVCENTRILMYRLLQKPYVPKVDMNLDHSVVDSVRLRKALMEVITSLLAAYGSKVPKPSETHTDPEKDKKIFSKICKTEELLELPTLSAVTSDSAQPHSLPASMPSSQPQSRSESLPLTHPNSEPNPKLDSQPNSSPVRRPSLIKVKTASTSVLPTSILQRPPSIVPRPETAAIQHTQQSIEIH.

The disordered stretch occupies residues 1 to 42 (MRSNSIFTKEIDSEAVKKSSNLRPPSTGSSNSNGSDTASPKK). A compositionally biased stretch (low complexity) spans 26 to 38 (STGSSNSNGSDTA). Serine 35 is subject to Phosphoserine. Active-site residues include histidine 171, aspartate 188, and cysteine 229. A disordered region spans residues 320–415 (AVTSDSAQPH…QHTQQSIEIH (96 aa)). Composition is skewed to polar residues over residues 335–368 (MPSS…NSSP), 379–390 (TASTSVLPTSIL), and 405–415 (IQHTQQSIEIH). Serine 367 is subject to Phosphoserine.

It belongs to the peptidase C48 family.

It localises to the cytoplasm. It is found in the nucleus. In terms of biological role, protease that catalyzes two essential functions in the NEDD8 pathway: processing of full-length NEDD8 to its mature form and deconjugation of NEDD8 from targeted proteins such as the pcu1, pcu2 and pcu4 cullins and other proteins. Has a role in meiosis. This chain is NEDD8-specific protease 2 (nep2), found in Schizosaccharomyces pombe (strain 972 / ATCC 24843) (Fission yeast).